We begin with the raw amino-acid sequence, 37 residues long: Photosystem II reaction center protein Psb30 (37 aa).

The chain crosses the membrane as a helical span at residues 10–30 (LISLLLLTLIMLAGPAVIALW).

This sequence belongs to the Psb30/Ycf12 family. In terms of assembly, PSII is composed of 1 copy each of membrane proteins PsbA, PsbB, PsbC, PsbD, PsbE, PsbF, PsbH, PsbI, PsbJ, PsbK, PsbL, PsbM, PsbT, PsbX, Psb30/Ycf12, peripheral proteins PsbO, CyanoQ (PsbQ), PsbU, PsbV and a large number of cofactors. It forms dimeric complexes.

Its subcellular location is the cell inner membrane. In terms of biological role, a core subunit of photosystem II (PSII), probably helps stabilize the reaction center. This Gloeobacter violaceus (strain ATCC 29082 / PCC 7421) protein is Photosystem II reaction center protein Psb30.